Reading from the N-terminus, the 402-residue chain is Imidazolonepropionase (402 aa).

Fe(3+) is bound by residues His-66 and His-68. Zn(2+) contacts are provided by His-66 and His-68. 3 residues coordinate 4-imidazolone-5-propanoate: Arg-75, Tyr-138, and His-171. Tyr-138 is an N-formimidoyl-L-glutamate binding site. His-236 serves as a coordination point for Fe(3+). His-236 contributes to the Zn(2+) binding site. Gln-239 lines the 4-imidazolone-5-propanoate pocket. Asp-311 serves as a coordination point for Fe(3+). Asp-311 contributes to the Zn(2+) binding site. Positions 313 and 315 each coordinate N-formimidoyl-L-glutamate. Position 316 (Thr-316) interacts with 4-imidazolone-5-propanoate.

Belongs to the metallo-dependent hydrolases superfamily. HutI family. Zn(2+) serves as cofactor. It depends on Fe(3+) as a cofactor.

The protein resides in the cytoplasm. It catalyses the reaction 4-imidazolone-5-propanoate + H2O = N-formimidoyl-L-glutamate. It functions in the pathway amino-acid degradation; L-histidine degradation into L-glutamate; N-formimidoyl-L-glutamate from L-histidine: step 3/3. Its function is as follows. Catalyzes the hydrolytic cleavage of the carbon-nitrogen bond in imidazolone-5-propanoate to yield N-formimidoyl-L-glutamate. It is the third step in the universal histidine degradation pathway. This chain is Imidazolonepropionase, found in Pseudomonas aeruginosa (strain LESB58).